The primary structure comprises 648 residues: FAD-binding monooxygenase trt3 (648 aa).

Residues 118–121, 130–131, and Tyr136 contribute to the FAD site; these read TWYW and DI. 128-130 provides a ligand contact to NADP(+); that stretch reads MCD. NADP(+) is bound by residues 274-280 and 297-298; these read TGSTAVQ and RT.

This sequence belongs to the FAD-binding monooxygenase family. Requires FAD as cofactor.

Its pathway is secondary metabolite biosynthesis; terpenoid biosynthesis. Functionally, FAD-binding monooxygenase; part of the gene cluster that mediates the biosynthesis of terretonin, a fungal meroterpenoid that acts as a mycotoxin. The first step of the pathway is the synthesis of 3,5-dimethylorsellinic acid (DMOA) by the polyketide synthase trt4. DMOA is then prenylated into farnesyl-DMOA by the polyprenyl transferase trt2. Methylation by the methyltransferase trt5 then leads to farnesyl-DMOA methyl ester which is further subject to epoxidation by the FAD-dependent monooxygenase trt8 to yield epoxyfarnesyl-DMOA methyl ester. Cyclization of epoxyfarnesyl-DMOA methyl ester by the terpene cyclase trt1 leads to a tetracycle intermediate which is in turn converted to preterretonin. Dehydrogenase trt9 comes next to transform preterretonin to preterrenoid. The FAD-dependent monooxygenase trt3 is then required for the C-hydroxylation at C16 of preterrenoid to yield terrenoid. The cytochrome P450 trt6 catalyzes three successive oxidations to transform terrenoid into an unstable intermediate, which then undergoes the D-ring expansion and unusual rearrangement of the methoxy group to afford the core skeleton of terretonin. Trt14 catalyzes the D-ring expansion of terretonin involving intramolecular methoxy rearrangement as well as the hydrolysis of the expanded D-ring and the methyl ester moiety. Finally, the nonheme iron-dependent dioxygenase trt7 accomplishes the last two oxidation reactions steps to complete the biosynthesis of terretonin. Terretonin C is produced via spontaneous decarboxylation of the terretonin precursor. Another shunt product of the terretonin biosynthesis is dihydrofarnesyl-DMOA, derived from epoxyfarnesyl-DMOA through hydrolysis of the epoxide. The polypeptide is FAD-binding monooxygenase trt3 (Aspergillus terreus (strain NIH 2624 / FGSC A1156)).